A 264-amino-acid chain; its full sequence is Glyceraldehyde-3-phosphate dehydrogenase (264 aa).

Residues R45 and T93 each contribute to the NAD(+) site. Residues 123-125 (SCT) and T154 each bind D-glyceraldehyde 3-phosphate. The active-site Nucleophile is C124. N155 contributes to the NAD(+) binding site. D-glyceraldehyde 3-phosphate contacts are provided by residues R169, 182 to 183 (TG), and R205. The tract at residues 245–264 (GILGYTEDPXVSSDXKGNSH) is disordered.

The protein belongs to the glyceraldehyde-3-phosphate dehydrogenase family. In terms of assembly, homotetramer.

It localises to the cytoplasm. The catalysed reaction is D-glyceraldehyde 3-phosphate + phosphate + NAD(+) = (2R)-3-phospho-glyceroyl phosphate + NADH + H(+). It participates in carbohydrate degradation; glycolysis; pyruvate from D-glyceraldehyde 3-phosphate: step 1/5. In terms of biological role, catalyzes the oxidative phosphorylation of glyceraldehyde 3-phosphate (G3P) to 1,3-bisphosphoglycerate (BPG) using the cofactor NAD. The first reaction step involves the formation of a hemiacetal intermediate between G3P and a cysteine residue, and this hemiacetal intermediate is then oxidized to a thioester, with concomitant reduction of NAD to NADH. The reduced NADH is then exchanged with the second NAD, and the thioester is attacked by a nucleophilic inorganic phosphate to produce BPG. This is Glyceraldehyde-3-phosphate dehydrogenase (gap) from Borrelia hermsii.